The sequence spans 447 residues: Probable glycine dehydrogenase (decarboxylating) subunit 1 (447 aa).

The protein belongs to the GcvP family. N-terminal subunit subfamily. The glycine cleavage system is composed of four proteins: P, T, L and H. In this organism, the P 'protein' is a heterodimer of two subunits.

It carries out the reaction N(6)-[(R)-lipoyl]-L-lysyl-[glycine-cleavage complex H protein] + glycine + H(+) = N(6)-[(R)-S(8)-aminomethyldihydrolipoyl]-L-lysyl-[glycine-cleavage complex H protein] + CO2. The glycine cleavage system catalyzes the degradation of glycine. The P protein binds the alpha-amino group of glycine through its pyridoxal phosphate cofactor; CO(2) is released and the remaining methylamine moiety is then transferred to the lipoamide cofactor of the H protein. This is Probable glycine dehydrogenase (decarboxylating) subunit 1 from Maricaulis maris (strain MCS10) (Caulobacter maris).